The following is a 480-amino-acid chain: MSTYSLSETHKAMLEHSLVESDPQVAEIMKKEVQRQRESIILIASENVTSRAVFDALGSPMSNKYSEGLPGARYYGGNQHIDEIEVLCQNRALEAFHLDPKQWGVNVQCLSGSPANLQVYQAIMPVHGRLMGLDLPHGGHLSHGYQTPQRKISAVSTYFETMPYRVNIDTGLIDYDTLEKNAQLFRPKVLVAGTSAYCRLIDYERMRKIADSVGAYLVVDMAHISGLIASEVIPSPFLYADVVTTTTHKSLRGPRGAMIFFRRGVRSVDAKTGKETLYDLEDKINFSVFPGHQGGPHNHTITALAVALKQAASPEFKEYQQKVVANAKALEKKLKELGYKLVSDGTDSHMVLVDLRPIGVDGARVEFLLEQINITCNKNAVPGDKSALTPGGLRIGTPAMTSRGFGEADFEKVAVFVDEAVKLCKEIQASLPKEANKQKDFKAKIATSDIPRINELKQEIAAWSNTFPLPVEGWRYDAGL.

Position 249 is an N6-(pyridoxal phosphate)lysine (K249).

It belongs to the SHMT family. Homotetramer. Pyridoxal 5'-phosphate serves as cofactor.

The protein localises to the cytoplasm. It catalyses the reaction (6R)-5,10-methylene-5,6,7,8-tetrahydrofolate + glycine + H2O = (6S)-5,6,7,8-tetrahydrofolate + L-serine. Its pathway is one-carbon metabolism; tetrahydrofolate interconversion. Its function is as follows. Interconversion of serine and glycine. This chain is Serine hydroxymethyltransferase, cytosolic (for), found in Neurospora crassa (strain ATCC 24698 / 74-OR23-1A / CBS 708.71 / DSM 1257 / FGSC 987).